Consider the following 335-residue polypeptide: Lipoyl synthase (335 aa).

[4Fe-4S] cluster contacts are provided by Cys55, Cys60, Cys66, Cys81, Cys85, Cys88, and Ser292. The Radical SAM core domain occupies 67–281 (WEDREATFLI…SQRAEEIGFQ (215 aa)).

This sequence belongs to the radical SAM superfamily. Lipoyl synthase family. [4Fe-4S] cluster is required as a cofactor.

The protein localises to the cytoplasm. It carries out the reaction [[Fe-S] cluster scaffold protein carrying a second [4Fe-4S](2+) cluster] + N(6)-octanoyl-L-lysyl-[protein] + 2 oxidized [2Fe-2S]-[ferredoxin] + 2 S-adenosyl-L-methionine + 4 H(+) = [[Fe-S] cluster scaffold protein] + N(6)-[(R)-dihydrolipoyl]-L-lysyl-[protein] + 4 Fe(3+) + 2 hydrogen sulfide + 2 5'-deoxyadenosine + 2 L-methionine + 2 reduced [2Fe-2S]-[ferredoxin]. Its pathway is protein modification; protein lipoylation via endogenous pathway; protein N(6)-(lipoyl)lysine from octanoyl-[acyl-carrier-protein]: step 2/2. Its function is as follows. Catalyzes the radical-mediated insertion of two sulfur atoms into the C-6 and C-8 positions of the octanoyl moiety bound to the lipoyl domains of lipoate-dependent enzymes, thereby converting the octanoylated domains into lipoylated derivatives. In Micrococcus luteus (strain ATCC 4698 / DSM 20030 / JCM 1464 / CCM 169 / CCUG 5858 / IAM 1056 / NBRC 3333 / NCIMB 9278 / NCTC 2665 / VKM Ac-2230) (Micrococcus lysodeikticus), this protein is Lipoyl synthase.